Here is a 25-residue protein sequence, read N- to C-terminus: Caerin-1.17 (25 aa).

Leu-25 carries the post-translational modification Leucine amide.

It belongs to the frog skin active peptide (FSAP) family. Caerin subfamily. In terms of tissue distribution, expressed by the skin dorsal glands.

It localises to the secreted. Caerin-1.17 shows significant activity against Gram-positive organisms, but is less effective against Gram-negative organisms. This is Caerin-1.17 from Ranoidea gracilenta (Dainty green tree frog).